Reading from the N-terminus, the 441-residue chain is C4-dicarboxylate transport protein (441 aa).

The Cytoplasmic portion of the chain corresponds to Met1–Gly30. Residues Ile31 to Asp49 form a helical membrane-spanning segment. The Periplasmic segment spans residues Ala50–Ala68. Residues Thr69–Ala87 traverse the membrane as a helical segment. Residues Met88–Leu99 are Cytoplasmic-facing. Residues Val100–Asp118 traverse the membrane as a helical segment. Residues Pro119 to Thr149 are Periplasmic-facing. Residues Thr150 to Val168 form a helical membrane-spanning segment. Residues Leu169–Gly171 lie on the Cytoplasmic side of the membrane. Residues Ile172–Ala190 form a helical membrane-spanning segment. The Periplasmic portion of the chain corresponds to Leu191–Gly209. Residues Ala210–Asn228 traverse the membrane as a helical segment. At Leu229–Phe241 the chain is on the cytoplasmic side. Residues Leu242 to Leu260 traverse the membrane as a helical segment. The Periplasmic portion of the chain corresponds to Ser261 to Ala281. A helical membrane pass occupies residues Ala282–Val300. Residues Gly301 to Thr320 lie on the Cytoplasmic side of the membrane. A helical membrane pass occupies residues Leu321 to Gln339. Topologically, residues Ile340–Ser350 are periplasmic. The chain crosses the membrane as a helical span at residues Lys351–Ser369. At Val370–Gly378 the chain is on the cytoplasmic side. Residues Met379–Phe398 form a helical membrane-spanning segment. At Val399–Thr405 the chain is on the periplasmic side. Residues Ile406–Leu424 traverse the membrane as a helical segment. Residues Gly425 to Glu441 lie on the Cytoplasmic side of the membrane.

It belongs to the dicarboxylate/amino acid:cation symporter (DAACS) (TC 2.A.23) family.

It localises to the cell inner membrane. Its function is as follows. Responsible for the transport of dicarboxylates such as succinate, fumarate, and malate from the periplasm across the inner membrane. This transport system plays an important role in the energy supply of rhizobium-legume symbionts. This chain is C4-dicarboxylate transport protein (dctA), found in Rhizobium meliloti (strain 1021) (Ensifer meliloti).